A 67-amino-acid chain; its full sequence is DNA-directed RNA polymerase subunit omega (67 aa).

Belongs to the RNA polymerase subunit omega family. The RNAP catalytic core consists of 2 alpha, 1 beta, 1 beta' and 1 omega subunit. When a sigma factor is associated with the core the holoenzyme is formed, which can initiate transcription.

It carries out the reaction RNA(n) + a ribonucleoside 5'-triphosphate = RNA(n+1) + diphosphate. Promotes RNA polymerase assembly. Latches the N- and C-terminal regions of the beta' subunit thereby facilitating its interaction with the beta and alpha subunits. In Burkholderia ambifaria (strain ATCC BAA-244 / DSM 16087 / CCUG 44356 / LMG 19182 / AMMD) (Burkholderia cepacia (strain AMMD)), this protein is DNA-directed RNA polymerase subunit omega.